A 379-amino-acid polypeptide reads, in one-letter code: ORC1-type DNA replication protein 2 (379 aa).

Residues 69–73 (TGKTT), Tyr-211, and Arg-223 contribute to the ATP site.

It belongs to the CDC6/cdc18 family. In terms of assembly, interacts with MCM. Post-translationally, autophosphorylated on a serine. Phosphorylation is inhibited by binding to MCM. Both single-stranded DNA and double-stranded DNA inhibit the phosphorylation reaction.

Involved in regulation of DNA replication. Dissociates the MCM complex and inhibits the MCM helicase activity, suggesting that it may function as a helicase loader. Binds to both specific and random double-stranded or single-stranded DNA. The protein is ORC1-type DNA replication protein 2 (cdc6-2) of Methanothermobacter thermautotrophicus (strain ATCC 29096 / DSM 1053 / JCM 10044 / NBRC 100330 / Delta H) (Methanobacterium thermoautotrophicum).